The primary structure comprises 618 residues: DNA ligase 2 (618 aa).

A compositionally biased stretch (basic and acidic residues) spans 197–208 (DKKTLESREDAK). Residues 197 to 250 (DKKTLESREDAKSVPPASQPEITNKISGDTSPNTSESVQTKKSDPDTSSNVDPS) are disordered. Over residues 216–234 (PEITNKISGDTSPNTSESV) the composition is skewed to polar residues. E312 provides a ligand contact to ATP. K314 serves as the catalytic N6-AMP-lysine intermediate. 6 residues coordinate ATP: R319, R334, E363, F403, R476, and K482. The disordered stretch occupies residues 459–480 (HEGVMLKDPDSTYNPGSRGQHW).

This sequence belongs to the ATP-dependent DNA ligase family. It depends on Mg(2+) as a cofactor.

It catalyses the reaction ATP + (deoxyribonucleotide)n-3'-hydroxyl + 5'-phospho-(deoxyribonucleotide)m = (deoxyribonucleotide)n+m + AMP + diphosphate.. Functionally, DNA ligase that seals nicks in double-stranded DNA during DNA replication, DNA recombination and DNA repair. The polypeptide is DNA ligase 2 (Haloquadratum walsbyi (strain DSM 16790 / HBSQ001)).